The following is a 482-amino-acid chain: MTQHPPLTIVGGGLAGCEAAWQAARAGLRVILIEMRPLRTTEAHLGDGLAELVCSNSLRSDDPLYNAVGLLHEEMRRAGSLILAMAEAHRVPAGGALAVDRQGFSDAITRALAEHPLIEIRRGEVDRLPAVEDGPAIIASGPLTSAALAAAIAEATGETSLAFFDAIAPIVHKDSIDFDRAWFQSRYDKGDGRDYINCPLTRDQYDAFVDALLAGEKTMFKEWEGTPYFDGCLPIEVMAERGRETLAFGPMKPVGLTDPRNPGLRPHAVVQLRQDNALGTLYNMVGFQTKLKHGEQARIFRMIPGLENAEFARLGGIHRNTFLNSPRLLDPTLRLKARPHLRFAGQITGCEGYVESAAIGLLAGRFASAEILDAASFAPPPPTTALGGLLGHITGGANAETFQPMNVNFGLLPPLEARPVRPGAKPRVPKGRERKLESARRALVDLGDWLRQPSPWSAEDSPRAALPIPEPTPLGPASGSSE.

An FAD-binding site is contributed by 11–16; the sequence is GGGLAG. Residues 450–482 form a disordered region; that stretch reads LRQPSPWSAEDSPRAALPIPEPTPLGPASGSSE.

Belongs to the MnmG family. TrmFO subfamily. FAD serves as cofactor.

It localises to the cytoplasm. It carries out the reaction uridine(54) in tRNA + (6R)-5,10-methylene-5,6,7,8-tetrahydrofolate + NADH + H(+) = 5-methyluridine(54) in tRNA + (6S)-5,6,7,8-tetrahydrofolate + NAD(+). The catalysed reaction is uridine(54) in tRNA + (6R)-5,10-methylene-5,6,7,8-tetrahydrofolate + NADPH + H(+) = 5-methyluridine(54) in tRNA + (6S)-5,6,7,8-tetrahydrofolate + NADP(+). Functionally, catalyzes the folate-dependent formation of 5-methyl-uridine at position 54 (M-5-U54) in all tRNAs. The protein is Methylenetetrahydrofolate--tRNA-(uracil-5-)-methyltransferase TrmFO of Rhodospirillum rubrum (strain ATCC 11170 / ATH 1.1.1 / DSM 467 / LMG 4362 / NCIMB 8255 / S1).